Here is a 463-residue protein sequence, read N- to C-terminus: L-seryl-tRNA(Sec) selenium transferase (463 aa).

Lys295 is modified (N6-(pyridoxal phosphate)lysine).

Belongs to the SelA family. In terms of assembly, homodecamer; pentamer of dimers. Binds only one seryl-tRNA(Sec) per dimer. The cofactor is pyridoxal 5'-phosphate.

Its subcellular location is the cytoplasm. The enzyme catalyses L-seryl-tRNA(Sec) + selenophosphate + H(+) = L-selenocysteinyl-tRNA(Sec) + phosphate. The protein operates within aminoacyl-tRNA biosynthesis; selenocysteinyl-tRNA(Sec) biosynthesis; selenocysteinyl-tRNA(Sec) from L-seryl-tRNA(Sec) (bacterial route): step 1/1. In terms of biological role, converts seryl-tRNA(Sec) to selenocysteinyl-tRNA(Sec) required for selenoprotein biosynthesis. The protein is L-seryl-tRNA(Sec) selenium transferase of Photorhabdus laumondii subsp. laumondii (strain DSM 15139 / CIP 105565 / TT01) (Photorhabdus luminescens subsp. laumondii).